The primary structure comprises 1165 residues: Autophagy-related protein 11 (1165 aa).

2 coiled-coil regions span residues 239–304 (NKLN…YKNM) and 670–853 (DNIR…KQKK).

It belongs to the ATG11 family. Homodimer and potential homooligomers.

The protein resides in the preautophagosomal structure membrane. In terms of biological role, plays an essential role in both non-selective and selective autophagy such as mitophagy. Recruits mitochondria for their selective degradation via autophagy (mitophagy) during starvation, through its interaction with ATG32. Works as scaffold proteins that recruit ATG proteins to the pre-autophagosome (PAS), the site of vesicle/autophagosome formation. Required for ATG9 anterograde transport from the mitochondria to the PAS. This Candida albicans (strain SC5314 / ATCC MYA-2876) (Yeast) protein is Autophagy-related protein 11.